The sequence spans 503 residues: Catalase (503 aa).

The interval 1–26 (MAKDDKRLTGLFGHPVSDRENSMTAG) is disordered. Residues histidine 56 and asparagine 129 contribute to the active site. Tyrosine 339 provides a ligand contact to heme.

This sequence belongs to the catalase family. Homodimer. The cofactor is heme.

The catalysed reaction is 2 H2O2 = O2 + 2 H2O. Decomposes hydrogen peroxide into water and oxygen; serves to protect cells from the toxic effects of hydrogen peroxide. The sequence is that of Catalase (katA) from Staphylococcus haemolyticus (strain JCSC1435).